Here is an 847-residue protein sequence, read N- to C-terminus: Receptor-like protein 12 (847 aa).

An N-terminal signal peptide occupies residues 1-27 (MMIRSHRHWVFSSRIIIFLSLLVHSLA). Residues 28–798 (SSSPHFCRDD…LSEAEENMFN (771 aa)) are Extracellular-facing. 4 N-linked (GlcNAc...) asparagine glycosylation sites follow: N52, N66, N103, and N132. LRR repeat units follow at residues 109 to 133 (LQYL…LGNL), 135 to 157 (HLTL…IGNL), 158 to 181 (NQLR…LGNL), 183 to 205 (RLVN…IGDL), 206 to 229 (KQLR…LGNL), 231 to 253 (NLVH…IGNL), 254 to 277 (IELR…FANL), 279 to 301 (KLSI…MSIF), 302 to 325 (HNLE…LLLI), 326 to 350 (PSLE…TSSS), 351 to 374 (TKLQ…ISRL), 375 to 398 (LNLE…ISKL), 400 to 422 (NLLH…LWRL), 424 to 442 (TMVL…SQEE), 443 to 466 (ALIE…ICKL), 467 to 491 (SSLG…RNFS), 492 to 514 (GSIK…IFSK), 516 to 539 (TELV…LINC), 541 to 562 (ALEL…WLES), 563 to 587 (LPSL…HASI), 589 to 613 (FQSL…YFSN), 657 to 681 (RRDF…LGYL), 682 to 704 (KELR…FLAN), 705 to 729 (LTKL…LAAL), and 731 to 754 (FLSY…QFQR). Residue N180 is glycosylated (N-linked (GlcNAc...) asparagine). N-linked (GlcNAc...) asparagine glycans are attached at residues N210 and N228. Residues N263, N276, and N289 are each glycosylated (N-linked (GlcNAc...) asparagine). An N-linked (GlcNAc...) asparagine glycan is attached at N346. An N-linked (GlcNAc...) asparagine glycan is attached at N386. A glycan (N-linked (GlcNAc...) asparagine) is linked at N437. N489 and N503 each carry an N-linked (GlcNAc...) asparagine glycan. N601 carries an N-linked (GlcNAc...) asparagine glycan. 2 N-linked (GlcNAc...) asparagine glycosylation sites follow: N688 and N704. N736 carries an N-linked (GlcNAc...) asparagine glycan. Residues 799–819 (WVAAAIAYGPGVLCGLVIGHF) form a helical membrane-spanning segment. The Cytoplasmic segment spans residues 820-847 (YTSHNHEWFTEKFGRKQHKALTSVKCSL).

The protein belongs to the RLP family.

It localises to the cell membrane. In terms of biological role, involved in the perception of CLV3 and CLV3-like peptides, that act as extracellular signals regulating meristems maintenance. The sequence is that of Receptor-like protein 12 from Arabidopsis thaliana (Mouse-ear cress).